Consider the following 206-residue polypeptide: Small ribosomal subunit protein uS4 (206 aa).

The S4 RNA-binding domain occupies Gln96 to Val156.

Belongs to the universal ribosomal protein uS4 family. As to quaternary structure, part of the 30S ribosomal subunit. Contacts protein S5. The interaction surface between S4 and S5 is involved in control of translational fidelity.

In terms of biological role, one of the primary rRNA binding proteins, it binds directly to 16S rRNA where it nucleates assembly of the body of the 30S subunit. With S5 and S12 plays an important role in translational accuracy. In Alteromonas mediterranea (strain DSM 17117 / CIP 110805 / LMG 28347 / Deep ecotype), this protein is Small ribosomal subunit protein uS4.